We begin with the raw amino-acid sequence, 204 residues long: Major capsid protein (204 aa).

The span at methionine 1–glycine 12 shows a compositional bias: polar residues. A disordered region spans residues methionine 1 to aspartate 74. Basic residues predominate over residues serine 13 to alanine 26. Over residues alanine 27–alanine 41 the composition is skewed to low complexity. A compositionally biased stretch (basic residues) spans arginine 42–threonine 57.

Belongs to the luteoviruses capsid protein family.

It localises to the virion. Major capsid protein. The sequence is that of Major capsid protein from Avena byzantina (Oat).